A 931-amino-acid polypeptide reads, in one-letter code: Beta-mannosidase A (931 aa).

A signal peptide spans 1–21; it reads MRHSIGLAAALLAPTLPVALG. N-linked (GlcNAc...) asparagine glycans are attached at residues Asn40, Asn79, Asn247, Asn282, Asn316, Asn326, and Asn347. The active-site Proton donor is Glu479. 8 N-linked (GlcNAc...) asparagine glycosylation sites follow: Asn550, Asn608, Asn658, Asn738, Asn790, Asn798, Asn830, and Asn918.

The protein belongs to the glycosyl hydrolase 2 family. Beta-mannosidase A subfamily. Homodimer.

It is found in the secreted. It catalyses the reaction Hydrolysis of terminal, non-reducing beta-D-mannose residues in beta-D-mannosides.. The protein operates within glycan metabolism; N-glycan degradation. Exoglycosidase that cleaves the single beta-linked mannose residue from the non-reducing end of beta-mannosidic oligosaccharides of various complexity and length. Involved in the degradation of polymeric mannan and galactomannan. The sequence is that of Beta-mannosidase A (mndA) from Aspergillus niger (strain ATCC MYA-4892 / CBS 513.88 / FGSC A1513).